Reading from the N-terminus, the 453-residue chain is Chromosomal replication initiator protein DnaA (453 aa).

Positions 1–71 are domain I, interacts with DnaA modulators; it reads MSEKEIWEKV…QAILFDVVGY (71 aa). The domain II stretch occupies residues 71 to 114; the sequence is YEVKPHFITTEELANYSNNETATPKEATKPSTETTEDNHVLGRE. The tract at residues 115-331 is domain III, AAA+ region; the sequence is QFNAHNTFDT…GALTRLLAYS (217 aa). Positions 159, 161, 162, and 163 each coordinate ATP. The tract at residues 332–453 is domain IV, binds dsDNA; the sequence is QLLGKPITTE…ENLEKEIRNV (122 aa).

It belongs to the DnaA family. As to quaternary structure, oligomerizes as a right-handed, spiral filament on DNA at oriC.

Its subcellular location is the cytoplasm. Its function is as follows. Plays an essential role in the initiation and regulation of chromosomal replication. ATP-DnaA binds to the origin of replication (oriC) to initiate formation of the DNA replication initiation complex once per cell cycle. Binds the DnaA box (a 9 base pair repeat at the origin) and separates the double-stranded (ds)DNA. Forms a right-handed helical filament on oriC DNA; dsDNA binds to the exterior of the filament while single-stranded (ss)DNA is stabiized in the filament's interior. The ATP-DnaA-oriC complex binds and stabilizes one strand of the AT-rich DNA unwinding element (DUE), permitting loading of DNA polymerase. After initiation quickly degrades to an ADP-DnaA complex that is not apt for DNA replication. Binds acidic phospholipids. In Staphylococcus aureus (strain MRSA252), this protein is Chromosomal replication initiator protein DnaA.